The primary structure comprises 328 residues: Homeobox protein Hox-D1 (328 aa).

Positions 204 to 209 match the Antp-type hexapeptide motif; the sequence is TFEWMK. The segment at residues 229–288 is a DNA-binding region (homeobox); the sequence is SSAIRTNFSTKQLTELEKEFHFNKYLTRARRIEIANCLHLNDTQVKIWFQNRRMKQKKRE. The interval 305–328 is disordered; sequence PLSGTTPTKFIKNPGSPSQSQEPS. The segment covering 319–328 has biased composition (polar residues); the sequence is GSPSQSQEPS.

This sequence belongs to the Antp homeobox family. Labial subfamily.

It is found in the nucleus. Functionally, sequence-specific transcription factor which is part of a developmental regulatory system that provides cells with specific positional identities on the anterior-posterior axis. Acts on the anterior body structures. This chain is Homeobox protein Hox-D1 (HOXD1), found in Homo sapiens (Human).